The sequence spans 284 residues: Bifunctional protein FolD (284 aa).

NADP(+)-binding positions include 165–167 (GAS), serine 190, and isoleucine 231.

Belongs to the tetrahydrofolate dehydrogenase/cyclohydrolase family. Homodimer.

The enzyme catalyses (6R)-5,10-methylene-5,6,7,8-tetrahydrofolate + NADP(+) = (6R)-5,10-methenyltetrahydrofolate + NADPH. It carries out the reaction (6R)-5,10-methenyltetrahydrofolate + H2O = (6R)-10-formyltetrahydrofolate + H(+). It participates in one-carbon metabolism; tetrahydrofolate interconversion. Catalyzes the oxidation of 5,10-methylenetetrahydrofolate to 5,10-methenyltetrahydrofolate and then the hydrolysis of 5,10-methenyltetrahydrofolate to 10-formyltetrahydrofolate. The polypeptide is Bifunctional protein FolD (Polynucleobacter asymbioticus (strain DSM 18221 / CIP 109841 / QLW-P1DMWA-1) (Polynucleobacter necessarius subsp. asymbioticus)).